The following is a 268-amino-acid chain: Tryptophan synthase alpha chain (268 aa).

Catalysis depends on proton acceptor residues Glu-49 and Asp-60.

This sequence belongs to the TrpA family. Tetramer of two alpha and two beta chains.

The catalysed reaction is (1S,2R)-1-C-(indol-3-yl)glycerol 3-phosphate + L-serine = D-glyceraldehyde 3-phosphate + L-tryptophan + H2O. It participates in amino-acid biosynthesis; L-tryptophan biosynthesis; L-tryptophan from chorismate: step 5/5. Its function is as follows. The alpha subunit is responsible for the aldol cleavage of indoleglycerol phosphate to indole and glyceraldehyde 3-phosphate. This Dechloromonas aromatica (strain RCB) protein is Tryptophan synthase alpha chain.